Reading from the N-terminus, the 201-residue chain is FMN-dependent NADH:quinone oxidoreductase (201 aa).

FMN-binding positions include S9 and 93-96 (MYNF).

Belongs to the azoreductase type 1 family. In terms of assembly, homodimer. It depends on FMN as a cofactor.

The enzyme catalyses 2 a quinone + NADH + H(+) = 2 a 1,4-benzosemiquinone + NAD(+). The catalysed reaction is N,N-dimethyl-1,4-phenylenediamine + anthranilate + 2 NAD(+) = 2-(4-dimethylaminophenyl)diazenylbenzoate + 2 NADH + 2 H(+). In terms of biological role, quinone reductase that provides resistance to thiol-specific stress caused by electrophilic quinones. Functionally, also exhibits azoreductase activity. Catalyzes the reductive cleavage of the azo bond in aromatic azo compounds to the corresponding amines. In Bradyrhizobium sp. (strain BTAi1 / ATCC BAA-1182), this protein is FMN-dependent NADH:quinone oxidoreductase.